Reading from the N-terminus, the 271-residue chain is Short chain dehydrogenase asqE (271 aa).

NADP(+) is bound by residues isoleucine 22, aspartate 70, and asparagine 99. Residues serine 152 and serine 153 each act as proton donor in the active site. Positions 167, 171, and 203 each coordinate NADP(+). The active-site Proton acceptor is the tyrosine 167. The active-site Lowers pKa of active site Tyr is lysine 171.

Belongs to the short-chain dehydrogenases/reductases (SDR) family.

The enzyme catalyses a primary alcohol + NAD(+) = an aldehyde + NADH + H(+). The catalysed reaction is a secondary alcohol + NAD(+) = a ketone + NADH + H(+). Its pathway is secondary metabolite biosynthesis. It participates in alkaloid biosynthesis. It functions in the pathway mycotoxin biosynthesis. Short chain dehydrogenase; part of the gene cluster that mediates the biosynthesis of the aspoquinolone mycotoxins. The role of asqE within the aspoquinolone pathway has still to be determined. The first step of the pathway is catalyzed by the nonribosomal peptide synthetase asqK that condenses anthranilic acid and O-methyl-L-tyrosine to produce 4'-methoxycyclopeptin. 4'-methoxycyclopeptin is then converted to 4'-methoxydehydrocyclopeptin by the ketoglutarate-dependent dioxygenase asqJ. AsqJ also converts its first product 4'-methoxydehydrocyclopeptin to 4'-methoxycyclopenin. The following conversion of 4'-methoxycyclopenin into 4'-methoxyviridicatin is catalyzed by the cyclopenase asqI. 4'-methoxyviridicatin is the precursor of quinolone natural products, and is further converted to quinolinone B. The prenyltransferase asqH1 then catalyzes the canonical Friedel-Crafts alkylation of quinolinone B with dimethylallyl cation to yield dimethylallyl quinolone, which is subjected to FAD-dependent dehydrogenation by the FAD-linked oxidoreductase asqF to yield conjugated aryl diene. The delta(3') double bond then serves as the site of the second alkylation with DMAPP catalyzed by the prenyltransferase asqH2 to yield a carbenium ion intermediate, which can be attacked by H(2)O to yield a styrenyl quinolone containing a C3'-hydroxyprenyl chain. The FAD-dependent monooxygenase asqG performs epoxidation of the terminal C7'-C8' olefin. Finally, after dehydratation of the epoxide at C3 by asqC, the quinolone epoxide rearrangement protein asqO catalyzes an enzymatic 3-exo-tet cyclization to yield the cyclopropyl-THF ring system in aspoquinolone. The chain is Short chain dehydrogenase asqE from Emericella nidulans (strain FGSC A4 / ATCC 38163 / CBS 112.46 / NRRL 194 / M139) (Aspergillus nidulans).